The primary structure comprises 950 residues: UPF0182 protein P9303_14611 (950 aa).

The next 9 membrane-spanning stretches (helical) occupy residues 20–40, 53–73, 102–122, 141–161, 173–193, 209–229, 259–279, 308–328, and 335–355; these read LLLS…WLWF, WLWQ…CQLW, LLGC…LAWL, IWAL…MLGN, CFCF…ALAI, FGLG…AQLV, CDVM…LLWL, SLAS…PWIQ, and LIAS…APFV.

It belongs to the UPF0182 family.

The protein resides in the cell membrane. This chain is UPF0182 protein P9303_14611, found in Prochlorococcus marinus (strain MIT 9303).